Here is a 338-residue protein sequence, read N- to C-terminus: Nuclear hormone receptor family member nhr-108 (338 aa).

A DNA-binding region (nuclear receptor) is located at residues N7–S82. The NR C4-type zinc finger occupies C10–C30. The NR C4-type; degenerate zinc-finger motif lies at K46–C65. The 247-residue stretch at N92–E338 folds into the NR LBD domain.

Belongs to the nuclear hormone receptor family.

The protein localises to the nucleus. In terms of biological role, orphan nuclear receptor. This is Nuclear hormone receptor family member nhr-108 (nhr-108) from Caenorhabditis elegans.